A 474-amino-acid polypeptide reads, in one-letter code: Bifunctional protein HldE (474 aa).

The segment at 1–318 is ribokinase; that stretch reads MKLSMPRFDQ…RAVQREQGSE (318 aa). 194–197 is an ATP binding site; sequence NLSE. Asp263 is a catalytic residue. The segment at 343-474 is cytidylyltransferase; sequence FTNGCFDILH…AIVEKIRQKG (132 aa).

It in the N-terminal section; belongs to the carbohydrate kinase PfkB family. This sequence in the C-terminal section; belongs to the cytidylyltransferase family. As to quaternary structure, homodimer.

It catalyses the reaction D-glycero-beta-D-manno-heptose 7-phosphate + ATP = D-glycero-beta-D-manno-heptose 1,7-bisphosphate + ADP + H(+). The enzyme catalyses D-glycero-beta-D-manno-heptose 1-phosphate + ATP + H(+) = ADP-D-glycero-beta-D-manno-heptose + diphosphate. The protein operates within nucleotide-sugar biosynthesis; ADP-L-glycero-beta-D-manno-heptose biosynthesis; ADP-L-glycero-beta-D-manno-heptose from D-glycero-beta-D-manno-heptose 7-phosphate: step 1/4. Its pathway is nucleotide-sugar biosynthesis; ADP-L-glycero-beta-D-manno-heptose biosynthesis; ADP-L-glycero-beta-D-manno-heptose from D-glycero-beta-D-manno-heptose 7-phosphate: step 3/4. It functions in the pathway bacterial outer membrane biogenesis; LPS core biosynthesis. Its function is as follows. Catalyzes the phosphorylation of D-glycero-D-manno-heptose 7-phosphate at the C-1 position to selectively form D-glycero-beta-D-manno-heptose-1,7-bisphosphate. Functionally, catalyzes the ADP transfer from ATP to D-glycero-beta-D-manno-heptose 1-phosphate, yielding ADP-D-glycero-beta-D-manno-heptose. The protein is Bifunctional protein HldE of Pseudomonas aeruginosa (strain ATCC 15692 / DSM 22644 / CIP 104116 / JCM 14847 / LMG 12228 / 1C / PRS 101 / PAO1).